We begin with the raw amino-acid sequence, 241 residues long: Host range factor p28 (241 aa).

The KilA-N domain occupies 21–131 (YIDEPNDIRL…QSILRGLVNW (111 aa)). The RING-type zinc-finger motif lies at 172–225 (CGICYEVVYSKRLENDRYFGLLDSCNHIFCITCINIWHRTRRETGASDNCPICR).

It belongs to the orthopoxvirus OPG021 family.

The protein localises to the host cytoplasm. It catalyses the reaction S-ubiquitinyl-[E2 ubiquitin-conjugating enzyme]-L-cysteine + [acceptor protein]-L-lysine = [E2 ubiquitin-conjugating enzyme]-L-cysteine + N(6)-ubiquitinyl-[acceptor protein]-L-lysine.. RING-finger E3 ubiquitin ligase which catalyzes the formation of both 'Lys-48'- and 'Lys-63'-linked polyubiquitin chains. Plays an important role in virulence by acting as an anti-apoptotic factor. In Ectromelia virus (strain Moscow) (ECTV), this protein is Host range factor p28 (OPG021).